The primary structure comprises 207 residues: Protein GrpE (207 aa).

Positions 1–31 (MSEHQTPPEEDLTVANGDSAEAVSEPDVTVA) are disordered.

It belongs to the GrpE family. Homodimer.

The protein localises to the cytoplasm. Functionally, participates actively in the response to hyperosmotic and heat shock by preventing the aggregation of stress-denatured proteins, in association with DnaK and GrpE. It is the nucleotide exchange factor for DnaK and may function as a thermosensor. Unfolded proteins bind initially to DnaJ; upon interaction with the DnaJ-bound protein, DnaK hydrolyzes its bound ATP, resulting in the formation of a stable complex. GrpE releases ADP from DnaK; ATP binding to DnaK triggers the release of the substrate protein, thus completing the reaction cycle. Several rounds of ATP-dependent interactions between DnaJ, DnaK and GrpE are required for fully efficient folding. This chain is Protein GrpE, found in Synechococcus elongatus (strain ATCC 33912 / PCC 7942 / FACHB-805) (Anacystis nidulans R2).